The following is a 525-amino-acid chain: Glutamate--cysteine ligase (525 aa).

Belongs to the glutamate--cysteine ligase type 1 family. Type 1 subfamily.

The catalysed reaction is L-cysteine + L-glutamate + ATP = gamma-L-glutamyl-L-cysteine + ADP + phosphate + H(+). The protein operates within sulfur metabolism; glutathione biosynthesis; glutathione from L-cysteine and L-glutamate: step 1/2. This chain is Glutamate--cysteine ligase, found in Vibrio vulnificus (strain CMCP6).